We begin with the raw amino-acid sequence, 92 residues long: DNA-directed RNA polymerase subunit Rpo11 (92 aa).

The protein belongs to the archaeal Rpo11/eukaryotic RPB11/RPC19 RNA polymerase subunit family. In terms of assembly, part of the RNA polymerase complex.

The protein resides in the cytoplasm. The enzyme catalyses RNA(n) + a ribonucleoside 5'-triphosphate = RNA(n+1) + diphosphate. Its function is as follows. DNA-dependent RNA polymerase (RNAP) catalyzes the transcription of DNA into RNA using the four ribonucleoside triphosphates as substrates. This Pyrobaculum aerophilum (strain ATCC 51768 / DSM 7523 / JCM 9630 / CIP 104966 / NBRC 100827 / IM2) protein is DNA-directed RNA polymerase subunit Rpo11.